Here is a 216-residue protein sequence, read N- to C-terminus: Thiopurine S-methyltransferase (216 aa).

W10, L45, E66, and R123 together coordinate S-adenosyl-L-methionine.

It belongs to the class I-like SAM-binding methyltransferase superfamily. TPMT family.

It localises to the cytoplasm. The catalysed reaction is S-adenosyl-L-methionine + a thiopurine = S-adenosyl-L-homocysteine + a thiopurine S-methylether.. The chain is Thiopurine S-methyltransferase from Pseudomonas putida (strain ATCC 700007 / DSM 6899 / JCM 31910 / BCRC 17059 / LMG 24140 / F1).